Reading from the N-terminus, the 431-residue chain is MAQFYSAKRRVTTRQIITVKVNDLDSFGQGVARHNGKALFIPGLLPEESAEVIITEDKKQFARARVSRRLNDSPERETPRCPHFGVCGGCQQQHVGIDLQQRSKSAALARLMKHEVNDIIAGASWGYRRRARLSLNCPPDKPLQMGFRKAGSSDIVNVEQCPVLAPQLEALLPRIRACLASLHGTRHLGHVELVQAGSGTLMILRHTAPLSAADKEKLERFSHSEGLSLFLAPFSEILETVSGEAPWYDSHGLRLTFSPRDFIQVNEAVNQQMVARALEWLDVRAEDRVLDLFCGMGNFTLPLATRAASVVGVEGVQALVEKGRENAIRNGLHNVTFFHENLEEDVTKQPWAKNGFDKVLLDPARAGATGVMRHIIKLKPIRIVYVSCNPATLARDSEALVNAGYEVTRLAMLDMFPHTGHLESMVLFERM.

A TRAM domain is found at 10 to 68 (RVTTRQIITVKVNDLDSFGQGVARHNGKALFIPGLLPEESAEVIITEDKKQFARARVSR). [4Fe-4S] cluster-binding residues include cysteine 81, cysteine 87, cysteine 90, and cysteine 161. Positions 264, 293, 298, 314, 341, and 362 each coordinate S-adenosyl-L-methionine. Cysteine 388 serves as the catalytic Nucleophile.

This sequence belongs to the class I-like SAM-binding methyltransferase superfamily. RNA M5U methyltransferase family. RlmD subfamily.

The enzyme catalyses uridine(1939) in 23S rRNA + S-adenosyl-L-methionine = 5-methyluridine(1939) in 23S rRNA + S-adenosyl-L-homocysteine + H(+). Functionally, catalyzes the formation of 5-methyl-uridine at position 1939 (m5U1939) in 23S rRNA. In Salmonella typhi, this protein is 23S rRNA (uracil(1939)-C(5))-methyltransferase RlmD.